The sequence spans 294 residues: Maltose/maltodextrin import ATP-binding protein MalK (294 aa).

One can recognise an ABC transporter domain in the interval 4-233 (VQLRNVTKAW…PADRFVAGFI (230 aa)). 36 to 43 (GPSGCGKS) serves as a coordination point for ATP.

Belongs to the ABC transporter superfamily. Maltooligosaccharide importer (TC 3.A.1.1.1) family. As to quaternary structure, the complex is composed of two ATP-binding proteins (MalK), two transmembrane proteins (MalG and MalK) and a solute-binding protein (MalE).

It localises to the cell inner membrane. The enzyme catalyses D-maltose(out) + ATP + H2O = D-maltose(in) + ADP + phosphate + H(+). Its function is as follows. Part of the ABC transporter complex MalEFGK involved in maltose/maltodextrin import. Responsible for energy coupling to the transport system. This chain is Maltose/maltodextrin import ATP-binding protein MalK, found in Klebsiella aerogenes (Enterobacter aerogenes).